A 318-amino-acid chain; its full sequence is Probable casein kinase I homolog ECU11_1980 (318 aa).

The region spanning 8-276 (YTICREIGKG…YLNSLLDKIF (269 aa)) is the Protein kinase domain. ATP-binding positions include 14 to 22 (IGKGGFGKV) and Lys37. Asp129 functions as the Proton acceptor in the catalytic mechanism.

This sequence belongs to the protein kinase superfamily. CK1 Ser/Thr protein kinase family. Casein kinase I subfamily.

It localises to the nucleus. It carries out the reaction L-seryl-[protein] + ATP = O-phospho-L-seryl-[protein] + ADP + H(+). The enzyme catalyses L-threonyl-[protein] + ATP = O-phospho-L-threonyl-[protein] + ADP + H(+). Its function is as follows. Involved in DNA repair. May regulate the activity of protein(s) involved in double strand break repair caused by gamma rays. The sequence is that of Probable casein kinase I homolog ECU11_1980 from Encephalitozoon cuniculi (strain GB-M1) (Microsporidian parasite).